We begin with the raw amino-acid sequence, 355 residues long: Holliday junction branch migration complex subunit RuvB (355 aa).

The interval 4–190 (TDKLAAERII…FGIVARLEFY (187 aa)) is large ATPase domain (RuvB-L). Residues Leu-29, Arg-30, Gly-71, Lys-74, Thr-75, Thr-76, 137 to 139 (EDY), Arg-180, Tyr-190, and Arg-227 contribute to the ATP site. Residue Thr-75 coordinates Mg(2+). Residues 191 to 261 (DADQLSRIVQ…IADAALAMLD (71 aa)) form a small ATPAse domain (RuvB-S) region. The tract at residues 264 to 355 (PVGFDLMDRK…QSIWDTPDAQ (92 aa)) is head domain (RuvB-H). 3 residues coordinate DNA: Arg-300, Arg-319, and Arg-324.

The protein belongs to the RuvB family. As to quaternary structure, homohexamer. Forms an RuvA(8)-RuvB(12)-Holliday junction (HJ) complex. HJ DNA is sandwiched between 2 RuvA tetramers; dsDNA enters through RuvA and exits via RuvB. An RuvB hexamer assembles on each DNA strand where it exits the tetramer. Each RuvB hexamer is contacted by two RuvA subunits (via domain III) on 2 adjacent RuvB subunits; this complex drives branch migration. In the full resolvosome a probable DNA-RuvA(4)-RuvB(12)-RuvC(2) complex forms which resolves the HJ.

The protein localises to the cytoplasm. It carries out the reaction ATP + H2O = ADP + phosphate + H(+). Functionally, the RuvA-RuvB-RuvC complex processes Holliday junction (HJ) DNA during genetic recombination and DNA repair, while the RuvA-RuvB complex plays an important role in the rescue of blocked DNA replication forks via replication fork reversal (RFR). RuvA specifically binds to HJ cruciform DNA, conferring on it an open structure. The RuvB hexamer acts as an ATP-dependent pump, pulling dsDNA into and through the RuvAB complex. RuvB forms 2 homohexamers on either side of HJ DNA bound by 1 or 2 RuvA tetramers; 4 subunits per hexamer contact DNA at a time. Coordinated motions by a converter formed by DNA-disengaged RuvB subunits stimulates ATP hydrolysis and nucleotide exchange. Immobilization of the converter enables RuvB to convert the ATP-contained energy into a lever motion, pulling 2 nucleotides of DNA out of the RuvA tetramer per ATP hydrolyzed, thus driving DNA branch migration. The RuvB motors rotate together with the DNA substrate, which together with the progressing nucleotide cycle form the mechanistic basis for DNA recombination by continuous HJ branch migration. Branch migration allows RuvC to scan DNA until it finds its consensus sequence, where it cleaves and resolves cruciform DNA. The sequence is that of Holliday junction branch migration complex subunit RuvB from Burkholderia multivorans (strain ATCC 17616 / 249).